The sequence spans 249 residues: uncharacterized protein (249 aa).

Polar residues predominate over residues 51-67; it reads IPKDSLTNGKSSKNCMS. Disordered regions lie at residues 51–131 and 205–240; these read IPKD…DSPV and YLNA…SSDG. Residues 93 to 106 show a composition bias toward low complexity; the sequence is SFQSMNSSMSSSTQ. Over residues 110–129 the composition is skewed to basic and acidic residues; that stretch reads RILDEKNKDQSSSNENDRDS.

Belongs to the asfivirus DP238L family.

This is an uncharacterized protein from African swine fever virus (isolate Tick/Malawi/Lil 20-1/1983) (ASFV).